A 1055-amino-acid chain; its full sequence is Kinesin-like protein KIN-7D, mitochondrial (1055 aa).

The segment covering methionine 1–serine 23 has biased composition (low complexity). The tract at residues methionine 1–threonine 36 is disordered. The N-terminal 96 residues, methionine 1–arginine 96, are a transit peptide targeting the mitochondrion. In terms of domain architecture, Kinesin motor spans serine 98 to isoleucine 415. Glycine 178–threonine 185 is an ATP binding site. Coiled-coil stretches lie at residues alanine 419 to serine 503, proline 618 to serine 653, and leucine 694 to threonine 823. The tract at residues proline 826–phenylalanine 856 is disordered. Residues leucine 880–aspartate 911 adopt a coiled-coil conformation. Residues asparagine 926–glutamate 963 form a disordered region. Basic and acidic residues predominate over residues proline 937–glutamine 954. The RING-type zinc-finger motif lies at cysteine 1008–arginine 1043.

Belongs to the TRAFAC class myosin-kinesin ATPase superfamily. Kinesin family. KIN-7 subfamily.

The protein resides in the mitochondrion. The sequence is that of Kinesin-like protein KIN-7D, mitochondrial from Arabidopsis thaliana (Mouse-ear cress).